The primary structure comprises 57 residues: Large ribosomal subunit protein bL32 (57 aa).

The protein belongs to the bacterial ribosomal protein bL32 family.

The polypeptide is Large ribosomal subunit protein bL32 (Ureaplasma parvum serovar 3 (strain ATCC 27815 / 27 / NCTC 11736)).